We begin with the raw amino-acid sequence, 357 residues long: MASLNPFDLLGDDAEDPSQLAVALSQKVEKAAAAVQPPKAAKFPTKPAPPSQAVRESRNAPQGGRGGTGGRGGFSRGRGNGGYNRDNRNNDAPGNENGFSGGYRRPSEDADGASRGGSVGGYRVGGGREGPRRGGVANGESGDVERPPRNYDRHSRTGHGTGMKRNGGGRGNWGTTEDDIPPTSEEPTTEVEKSPVAEKQGGEDETPEAKKELTAEEKAQKEAEEAEAREMTLEEYEKILEEKKKALQATKVEERKVDTKVFESMQQLSNKKNTDEEIFIKLGSDKEKRKDATEKAKKSLSINEFLKPADGKRYNGRGGGSRGRGGRGGRGEGGNQRYAKEAAAPAIGDTAQFPSLG.

The residue at position 2 (alanine 2) is an N-acetylalanine. Residues 25–232 (SQKVEKAAAA…AEEAEAREMT (208 aa)) form a disordered region. The span at 31–45 (AAAAVQPPKAAKFPT) shows a compositional bias: low complexity. Gly residues-rich tracts occupy residues 63 to 82 (GGRG…GNGG) and 114 to 128 (SRGG…GGGR). Basic and acidic residues predominate over residues 143–155 (DVERPPRNYDRHS). Over residues 159–172 (HGTGMKRNGGGRGN) the composition is skewed to gly residues. Over residues 190–232 (EVEKSPVAEKQGGEDETPEAKKELTAEEKAQKEAEEAEAREMT) the composition is skewed to basic and acidic residues. One can recognise an FF domain in the interval 239 to 299 (ILEEKKKALQ…KDATEKAKKS (61 aa)). The segment at 308-357 (PADGKRYNGRGGGSRGRGGRGGRGEGGNQRYAKEAAAPAIGDTAQFPSLG) is disordered. Residues 316–334 (GRGGGSRGRGGRGGRGEGG) are compositionally biased toward gly residues. Serine 355 is modified (phosphoserine).

The protein belongs to the SERBP1-HABP4 family.

Its subcellular location is the nucleus. It is found in the cytoplasm. It localises to the perinuclear region. In terms of biological role, ribosome-binding protein that acts as a regulator of mRNA translation by promoting ribosome inactivation. Binds RNA. The polypeptide is RGG repeats nuclear RNA binding protein C (Arabidopsis thaliana (Mouse-ear cress)).